The sequence spans 273 residues: Bifunctional protein FolD (273 aa).

NADP(+) is bound by residues 155–157 (GRS), S182, and I223.

It belongs to the tetrahydrofolate dehydrogenase/cyclohydrolase family. In terms of assembly, homodimer.

It carries out the reaction (6R)-5,10-methylene-5,6,7,8-tetrahydrofolate + NADP(+) = (6R)-5,10-methenyltetrahydrofolate + NADPH. The enzyme catalyses (6R)-5,10-methenyltetrahydrofolate + H2O = (6R)-10-formyltetrahydrofolate + H(+). Its pathway is one-carbon metabolism; tetrahydrofolate interconversion. In terms of biological role, catalyzes the oxidation of 5,10-methylenetetrahydrofolate to 5,10-methenyltetrahydrofolate and then the hydrolysis of 5,10-methenyltetrahydrofolate to 10-formyltetrahydrofolate. This chain is Bifunctional protein FolD, found in Pseudothermotoga lettingae (strain ATCC BAA-301 / DSM 14385 / NBRC 107922 / TMO) (Thermotoga lettingae).